Consider the following 150-residue polypeptide: UPF0260 protein VIBHAR_03078 (150 aa).

The protein belongs to the UPF0260 family.

In Vibrio campbellii (strain ATCC BAA-1116), this protein is UPF0260 protein VIBHAR_03078.